The chain runs to 118 residues: RxLR effector protein PITG_19617 (118 aa).

Positions 1 to 21 are cleaved as a signal peptide; that stretch reads MRAVYILAMACAATLQASSSA. The short motif at 50 to 64 is the RxLR-dEER element; it reads RLLRVEDKEEETEEE.

This sequence belongs to the RxLR effector family.

The protein localises to the secreted. It is found in the host nucleus. The protein resides in the host cytoplasm. In terms of biological role, effector that enhances P.infestans colonization of Nicotiana benthamiana leaves. This Phytophthora infestans (strain T30-4) (Potato late blight agent) protein is RxLR effector protein PITG_19617.